We begin with the raw amino-acid sequence, 372 residues long: Rab9 effector protein with kelch motifs (372 aa).

5 Kelch repeats span residues 49–95 (KVFI…FIPS), 100–146 (SIWV…TSSA), 151–203 (QLYV…AAGT), 204–250 (KLFI…SAVA), and 254–303 (HLYV…IIPW). The disordered stretch occupies residues 309 to 341 (SEKEDSNSATVNRDAEKGDSTEKGVTQGGDSQE). A compositionally biased stretch (basic and acidic residues) spans 321–330 (RDAEKGDSTE). The Kelch 6 repeat unit spans residues 349–372 (LCFVFGGMNTEGEIYDDCIVTAVD).

In terms of assembly, interacts with PIKFYVE; the interaction recruits RABEPK to the endosomal membrane. Interacts with RAB9 in its GTP-bound conformation. Post-translationally, phosphorylated on Ser residues by PIKFYVE.

Its subcellular location is the cytoplasm. The protein resides in the endosome membrane. Its function is as follows. Rab9 effector required for endosome to trans-Golgi network (TGN) transport. This Bos taurus (Bovine) protein is Rab9 effector protein with kelch motifs (RABEPK).